The chain runs to 408 residues: Protein trichome birefringence-like 14 (408 aa).

A helical; Signal-anchor for type II membrane protein membrane pass occupies residues 11 to 31 (GSVSLALIVLILLVIILLVSE). Residues 131 to 133 (GDS) carry the GDS motif motif. A DCXHWCLPGXXDXWN motif motif is present at residues 387 to 401 (DCLHWCLPGIPDTWN).

It belongs to the PC-esterase family. TBL subfamily.

It localises to the membrane. In terms of biological role, may act as a bridging protein that binds pectin and other cell wall polysaccharides. Probably involved in maintaining esterification of pectins. May be involved in the specific O-acetylation of cell wall polymers. The sequence is that of Protein trichome birefringence-like 14 (TBL14) from Arabidopsis thaliana (Mouse-ear cress).